A 75-amino-acid chain; its full sequence is Bacteriocin lactococcin-A (75 aa).

Positions 1–21 are excised as a propeptide; that stretch reads MKNQLNFNIVSDEELSEANGG. A helical membrane pass occupies residues 30-52; sequence AAGDLYYNTNTHKYVYQQTQNAF.

It localises to the secreted. It is found in the host cell membrane. Its function is as follows. Kills Lactococci. The sequence is that of Bacteriocin lactococcin-A (lcnA) from Lactococcus lactis subsp. cremoris (Streptococcus cremoris).